The sequence spans 201 residues: UPF0056 membrane protein PH0760 (201 aa).

6 consecutive transmembrane segments (helical) span residues 8 to 28 (FMILYTGMFAITNPIGAVPVF), 49 to 69 (ITVFITLTVFALVGQWIFKFF), 73 to 93 (IDAFAIAGGILLFRMGMEMLS), 111 to 131 (VAVIPLAIPLISGPGAITTVM), 140 to 160 (GIVILTIIAIGLTTYGILYSG), and 181 to 201 (LILTSMAMQMIINGIKGAFGI).

The protein belongs to the UPF0056 (MarC) family.

The protein localises to the cell membrane. The polypeptide is UPF0056 membrane protein PH0760 (Pyrococcus horikoshii (strain ATCC 700860 / DSM 12428 / JCM 9974 / NBRC 100139 / OT-3)).